Reading from the N-terminus, the 581-residue chain is Probable hexosyltransferase MUCI70 (581 aa).

Residues 1-58 (MTGLGVRSSSYGSLEKTGLNGVVLPIQITTTTRTKPSKMQKDREGIVHWICKFAGRKK) are Cytoplasmic-facing. Residues 59 to 79 (VGMLLLFLISAVVFLRVLYVG) traverse the membrane as a helical; Signal-anchor for type II membrane protein segment. Topologically, residues 80-581 (KGEDSQEGQG…NLPVRLPDSA (502 aa)) are lumenal. Asn-96, Asn-102, Asn-119, Asn-194, Asn-224, Asn-285, Asn-382, Asn-411, and Asn-488 each carry an N-linked (GlcNAc...) asparagine glycan. Positions 514–581 (RFARQRPPVP…NLPVRLPDSA (68 aa)) are disordered. A compositionally biased stretch (pro residues) spans 520–536 (PPVPNFPPPPPSPPPPV). The span at 553-571 (PPRRRGRDRRSGQRGHRKA) shows a compositional bias: basic residues.

It belongs to the glycosyltransferase 8 family. Expressed in siliques and seeds.

It localises to the golgi apparatus membrane. It participates in glycan metabolism; pectin biosynthesis. Functionally, probable glycosyltransferase involved in pectin and/or xylans biosynthesis in cell walls. Together with IRX14, required for xylan and pectin synthesis in seed coat epidermal (SCE) cells. Collaboratively with GAUT11, essential for the accumulation of seed mucilage, a gelatinous wall rich in unbranched rhamnogalacturonan I (RG I), and for shaping the surface morphology of seeds. In Arabidopsis thaliana (Mouse-ear cress), this protein is Probable hexosyltransferase MUCI70.